A 371-amino-acid polypeptide reads, in one-letter code: DNA replication and repair protein RecF (371 aa).

Position 30–37 (30–37) interacts with ATP; that stretch reads GENAQGKT.

The protein belongs to the RecF family.

It localises to the cytoplasm. In terms of biological role, the RecF protein is involved in DNA metabolism; it is required for DNA replication and normal SOS inducibility. RecF binds preferentially to single-stranded, linear DNA. It also seems to bind ATP. The protein is DNA replication and repair protein RecF of Lysinibacillus sphaericus (strain C3-41).